A 100-amino-acid chain; its full sequence is Small ribosomal subunit protein uS14c (100 aa).

Belongs to the universal ribosomal protein uS14 family. As to quaternary structure, part of the 30S ribosomal subunit.

Its subcellular location is the plastid. The protein resides in the chloroplast. Binds 16S rRNA, required for the assembly of 30S particles. The sequence is that of Small ribosomal subunit protein uS14c from Chlamydomonas reinhardtii (Chlamydomonas smithii).